Reading from the N-terminus, the 277-residue chain is 4-hydroxy-tetrahydrodipicolinate reductase (277 aa).

Glycine 9–methionine 14 is a binding site for NAD(+). Lysine 37 is an NADP(+) binding site. Position 75–77 (glycine 75–serine 77) interacts with NAD(+). Histidine 132 functions as the Proton donor/acceptor in the catalytic mechanism. The Proton donor role is filled by lysine 136. Position 142-143 (glycine 142–threonine 143) interacts with (S)-2,3,4,5-tetrahydrodipicolinate. Residues serine 245 to alanine 277 form a disordered region.

Belongs to the DapB family.

Its subcellular location is the cytoplasm. The catalysed reaction is (S)-2,3,4,5-tetrahydrodipicolinate + NAD(+) + H2O = (2S,4S)-4-hydroxy-2,3,4,5-tetrahydrodipicolinate + NADH + H(+). It catalyses the reaction (S)-2,3,4,5-tetrahydrodipicolinate + NADP(+) + H2O = (2S,4S)-4-hydroxy-2,3,4,5-tetrahydrodipicolinate + NADPH + H(+). It functions in the pathway amino-acid biosynthesis; L-lysine biosynthesis via DAP pathway; (S)-tetrahydrodipicolinate from L-aspartate: step 4/4. Functionally, catalyzes the conversion of 4-hydroxy-tetrahydrodipicolinate (HTPA) to tetrahydrodipicolinate. This is 4-hydroxy-tetrahydrodipicolinate reductase from Clavibacter sepedonicus (Clavibacter michiganensis subsp. sepedonicus).